The chain runs to 600 residues: Zinc metalloproteinase-disintegrin-like stejnihagin-A (600 aa).

The first 20 residues, 1 to 20 (MIEVLLVTICLAVFPYQGSS), serve as a signal peptide directing secretion. Positions 21 to 191 (IILESGNVND…KASQLVVTAE (171 aa)) are excised as a propeptide. Pyrrolidone carboxylic acid is present on glutamine 192. Residues 198 to 389 (RYVKLAIVAD…YNPQCILNAP (192 aa)) form the Peptidase M12B domain. Disulfide bonds link cysteine 306–cysteine 384, cysteine 346–cysteine 368, and cysteine 348–cysteine 351. N-linked (GlcNAc...) asparagine glycosylation occurs at asparagine 317. Histidine 331 is a Zn(2+) binding site. Glutamate 332 is an active-site residue. Residues histidine 335 and histidine 341 each contribute to the Zn(2+) site. An N-linked (GlcNAc...) asparagine glycan is attached at asparagine 367. Residues 397-483 (PPVCGNELLE…DCPTDDFHRN (87 aa)) form the Disintegrin domain. Valine 399, asparagine 402, leucine 404, glutamate 406, glutamate 409, and aspartate 412 together coordinate Ca(2+). Disulfide bonds link cysteine 400-cysteine 429, cysteine 411-cysteine 424, cysteine 413-cysteine 419, cysteine 423-cysteine 446, cysteine 437-cysteine 443, cysteine 442-cysteine 468, cysteine 455-cysteine 475, cysteine 462-cysteine 494, cysteine 487-cysteine 499, cysteine 506-cysteine 556, cysteine 521-cysteine 565, cysteine 534-cysteine 544, cysteine 551-cysteine 587, and cysteine 581-cysteine 593. Positions 461 to 463 (ECD) match the D/ECD-tripeptide motif. The N-linked (GlcNAc...) asparagine glycan is linked to asparagine 568.

The protein belongs to the venom metalloproteinase (M12B) family. P-III subfamily. P-IIIa sub-subfamily. Monomer. Zn(2+) is required as a cofactor. In terms of tissue distribution, expressed by the venom gland.

It localises to the secreted. This metalloproteinase-disintegrin-like impairs hemostasis in the envenomed animal. This Trimeresurus stejnegeri (Chinese green tree viper) protein is Zinc metalloproteinase-disintegrin-like stejnihagin-A.